Consider the following 185-residue polypeptide: HTH-type transcriptional regulator PuuR (185 aa).

The disordered stretch occupies residues 1 to 20 (MSDEGLAPGKRLSEIRQQQG). The HTH cro/C1-type domain maps to 12–66 (LSEIRQQQGLSQRRAAELSGLTHSAISTIEQDKVSPAISTLQKLLKVYGLSLSEF). Residues 23-42 (QRRAAELSGLTHSAISTIEQ) constitute a DNA-binding region (H-T-H motif). The Cupin type-2 domain occupies 111–178 (FETYQPGTTT…TSAGICRIIS (68 aa)).

The protein operates within amine and polyamine degradation; putrescine degradation [regulation]. In terms of biological role, represses puuA, puuD and puuP. The polypeptide is HTH-type transcriptional regulator PuuR (puuR) (Escherichia coli (strain K12)).